Here is a 344-residue protein sequence, read N- to C-terminus: Glyceraldehyde-3-phosphate dehydrogenase (344 aa).

Residues 11-12 and G110 each bind NAD(+); that span reads TI. D-glyceraldehyde 3-phosphate is bound at residue 139–141; the sequence is SCN. C140 functions as the Nucleophile in the catalytic mechanism. R169 is a binding site for NAD(+). D-glyceraldehyde 3-phosphate is bound at residue 195–196; the sequence is HG. An NAD(+)-binding site is contributed by Q302.

The protein belongs to the glyceraldehyde-3-phosphate dehydrogenase family. Homotetramer.

It is found in the cytoplasm. It catalyses the reaction D-glyceraldehyde 3-phosphate + phosphate + NADP(+) = (2R)-3-phospho-glyceroyl phosphate + NADPH + H(+). It carries out the reaction D-glyceraldehyde 3-phosphate + phosphate + NAD(+) = (2R)-3-phospho-glyceroyl phosphate + NADH + H(+). Its pathway is carbohydrate degradation; glycolysis; pyruvate from D-glyceraldehyde 3-phosphate: step 1/5. This Pyrobaculum neutrophilum (strain DSM 2338 / JCM 9278 / NBRC 100436 / V24Sta) (Thermoproteus neutrophilus) protein is Glyceraldehyde-3-phosphate dehydrogenase.